The sequence spans 157 residues: Transcription elongation factor GreA (157 aa).

Residues 12–74 adopt a coiled-coil conformation; that stretch reads LKKLEEELEY…TLEAMLKNAK (63 aa).

This sequence belongs to the GreA/GreB family.

In terms of biological role, necessary for efficient RNA polymerase transcription elongation past template-encoded arresting sites. The arresting sites in DNA have the property of trapping a certain fraction of elongating RNA polymerases that pass through, resulting in locked ternary complexes. Cleavage of the nascent transcript by cleavage factors such as GreA or GreB allows the resumption of elongation from the new 3'terminus. GreA releases sequences of 2 to 3 nucleotides. The protein is Transcription elongation factor GreA of Thermoanaerobacter pseudethanolicus (strain ATCC 33223 / 39E) (Clostridium thermohydrosulfuricum).